The primary structure comprises 122 residues: MNMMRIFYIGLSGVGMMFSSMASGNDAGGLQSPACGVVCDPYICVNSDGISPELTRKYLGEKAAENLQSLQGYDPSEFTFANGVFCDVKEKLCRDDRYFGVDGKRSGKINQTTTKMLFMCRE.

An N-terminal signal peptide occupies residues 1–22 (MNMMRIFYIGLSGVGMMFSSMA).

This is an uncharacterized protein from Escherichia coli (strain K12).